Reading from the N-terminus, the 148-residue chain is Hemoglobin subunit beta-B (148 aa).

The Globin domain maps to Asp3–His148. Heme b contacts are provided by His64 and His93.

Belongs to the globin family. Heterotetramer of two alpha chains and two beta chains. In terms of tissue distribution, red blood cells.

In terms of biological role, involved in oxygen transport from gills to the various peripheral tissues. This Seriola quinqueradiata (Five-ray yellowtail) protein is Hemoglobin subunit beta-B (hbb2).